The following is a 517-amino-acid chain: FERM domain-containing protein 5 (517 aa).

Positions 17–298 (YSCTVRLLDD…ENQAFYKLEK (282 aa)) constitute an FERM domain. The interval 308 to 353 (SNLFFKGSRFRYSGRVAKEVMESSAKIKREPPEIHRAGMVPSRSCP) is interaction with ROCK1. The disordered stretch occupies residues 344-367 (AGMVPSRSCPSITHGPRLSSVPRT). Position 375 is a phosphoserine (Ser375). Disordered stretches follow at residues 385–408 (DSAH…VRSS) and 485–517 (GHGG…VPLD). Polar residues predominate over residues 388 to 398 (HSTPVRSSSHG). Low complexity predominate over residues 498-517 (KGPQLQQQQWKGWGKSVPLD).

In terms of assembly, interacts with CTNND1, ITGB5 (via cytoplasmic domain) and ROCK1.

Its subcellular location is the cell junction. It localises to the adherens junction. Its function is as follows. May be involved in regulation of cell migration. May regulate cell-matrix interactions via its interaction with ITGB5 and modifying ITGB5 cytoplasmic tail interactions such as with FERMT2 and TLN1. May regulate ROCK1 kinase activity possibly involved in regulation of actin stress fiber formation. The protein is FERM domain-containing protein 5 (Frmd5) of Mus musculus (Mouse).